Here is a 210-residue protein sequence, read N- to C-terminus: dITP/XTP pyrophosphatase (210 aa).

13 to 18 lines the substrate pocket; the sequence is THNPGK. D45 and D74 together coordinate Mg(2+). The active-site Proton acceptor is D74. Substrate is bound by residues S75, 160–163, K183, and 195–196; these read FGYD and HR.

Belongs to the HAM1 NTPase family. As to quaternary structure, homodimer. Mg(2+) serves as cofactor.

It catalyses the reaction XTP + H2O = XMP + diphosphate + H(+). It carries out the reaction dITP + H2O = dIMP + diphosphate + H(+). The catalysed reaction is ITP + H2O = IMP + diphosphate + H(+). Functionally, pyrophosphatase that catalyzes the hydrolysis of nucleoside triphosphates to their monophosphate derivatives, with a high preference for the non-canonical purine nucleotides XTP (xanthosine triphosphate), dITP (deoxyinosine triphosphate) and ITP. Seems to function as a house-cleaning enzyme that removes non-canonical purine nucleotides from the nucleotide pool, thus preventing their incorporation into DNA/RNA and avoiding chromosomal lesions. The sequence is that of dITP/XTP pyrophosphatase from Rhodopseudomonas palustris (strain ATCC BAA-98 / CGA009).